The sequence spans 1198 residues: DNA polymerase (1198 aa).

3 disordered regions span residues 1 to 87 (MALV…PRGT), 179 to 199 (LEQPDGQGQAAEVEDHQPNPP), and 904 to 930 (QLALADSDAEESEDERAPTPFYSPPSG). Composition is skewed to low complexity over residues 30-40 (QQPTRAAPAPA) and 57-68 (APPTSGGSPASP).

The protein belongs to the DNA polymerase type-B family. As to quaternary structure, heterodimer with the terminal protein; this heterodimer binds to bp 9 to 18 of the genome. Forms a complex with viral pTP, DBP and hosts NFIA and POU2F1/OCT1 for initiation of replication.

The protein localises to the host nucleus. The enzyme catalyses DNA(n) + a 2'-deoxyribonucleoside 5'-triphosphate = DNA(n+1) + diphosphate. Functionally, eukaryotic-type DNA polymerase involved in viral genomic replication. DNA synthesis is protein primed, and acts in a strand displacement replication. Assembles in complex with viral pTP, DBP, host NFIA and host POU2F1/OCT1 on viral origin of replication. The polymerase covalently transfers dCMP onto pTP, thereby initiating complementary strand synthesis. This is DNA polymerase from Homo sapiens (Human).